Reading from the N-terminus, the 146-residue chain is Anti-sigma F factor (146 aa).

It belongs to the anti-sigma-factor family.

It carries out the reaction L-seryl-[protein] + ATP = O-phospho-L-seryl-[protein] + ADP + H(+). The catalysed reaction is L-threonyl-[protein] + ATP = O-phospho-L-threonyl-[protein] + ADP + H(+). In terms of biological role, binds to sigma F and blocks its ability to form an RNA polymerase holoenzyme (E-sigma F). Phosphorylates SpoIIAA on a serine residue. This phosphorylation may enable SpoIIAA to act as an anti-anti-sigma factor that counteracts SpoIIAB and thus releases sigma F from inhibition. In Lysinibacillus sphaericus (Bacillus sphaericus), this protein is Anti-sigma F factor.